An 85-amino-acid polypeptide reads, in one-letter code: Large ribosomal subunit protein bL27 (85 aa).

Residues 1–22 (MAHKKGASSTRNGRDSNAQRLG) are disordered. A compositionally biased stretch (polar residues) spans 7 to 19 (ASSTRNGRDSNAQ).

This sequence belongs to the bacterial ribosomal protein bL27 family.

The protein is Large ribosomal subunit protein bL27 of Leifsonia xyli subsp. xyli (strain CTCB07).